Here is a 185-residue protein sequence, read N- to C-terminus: Peptidyl-tRNA hydrolase (185 aa).

Y14 is a tRNA binding site. The active-site Proton acceptor is the H19. Residues F64, N66, and N112 each coordinate tRNA.

It belongs to the PTH family. As to quaternary structure, monomer.

It is found in the cytoplasm. The enzyme catalyses an N-acyl-L-alpha-aminoacyl-tRNA + H2O = an N-acyl-L-amino acid + a tRNA + H(+). Its function is as follows. Hydrolyzes ribosome-free peptidyl-tRNAs (with 1 or more amino acids incorporated), which drop off the ribosome during protein synthesis, or as a result of ribosome stalling. Functionally, catalyzes the release of premature peptidyl moieties from peptidyl-tRNA molecules trapped in stalled 50S ribosomal subunits, and thus maintains levels of free tRNAs and 50S ribosomes. The polypeptide is Peptidyl-tRNA hydrolase (Lacticaseibacillus paracasei (strain ATCC 334 / BCRC 17002 / CCUG 31169 / CIP 107868 / KCTC 3260 / NRRL B-441) (Lactobacillus paracasei)).